The primary structure comprises 237 residues: Concanavalin V (237 aa).

Mn(2+)-binding residues include Glu-8 and Asp-10. The Ca(2+) site is built by Asp-10, Tyr-12, Asn-14, and Asp-19. Asn-14 provides a ligand contact to a carbohydrate. Residues Asp-19 and His-24 each coordinate Mn(2+). Residues Gly-70, 98 to 100 (GLY), Asp-208, and Arg-228 each bind a carbohydrate.

Belongs to the leguminous lectin family. As to quaternary structure, homotetramer. Post-translationally, concanavalin A-like lectins of the Diocleinae subtribe undergo proteolytic processing referred to as circular permutation. The propeptide is split into an N-terminal and a C-terminal part, the gamma and beta chain, respectively. These are then religated in beta-gamma order to form the mature alpha chain. The beta and gamma chains can often be detected in cell extracts. Residues 1-118 of the mature chain, as displayed here, probably constitute the beta chain in the propeptide, residues 119-237 the gamma chain.

Functionally, D-mannose/D-glucose-binding lectin which binds alpha-methyl-D-mannoside, D-mannose and D-glucose in that order. Also binds to serum fetuin and ovalbumin. Has hemagglutinating activity towards rabbit erythrocytes. Is not toxic towards larvae of the brine shrimp Artemia. Induces relaxation in rat endothelized aorta. Shows a transient edematogenic effect in rat. In Canavalia cathartica (Jackbean), this protein is Concanavalin V.